Reading from the N-terminus, the 204-residue chain is Signal peptidase I (204 aa).

Residues 1–10 (MNSFKNFLKE) are Cytoplasmic-facing. Residues 11–30 (WGLFLLILSLLALSRIFFWS) form a helical membrane-spanning segment. Residues 31–204 (NVRVEGHSMD…LWPITRIGTF (174 aa)) lie on the Extracellular side of the membrane. Active-site residues include serine 38 and lysine 76.

The protein belongs to the peptidase S26 family.

The protein resides in the cell membrane. It carries out the reaction Cleavage of hydrophobic, N-terminal signal or leader sequences from secreted and periplasmic proteins.. This chain is Signal peptidase I (lepB), found in Streptococcus pneumoniae serotype 4 (strain ATCC BAA-334 / TIGR4).